Reading from the N-terminus, the 315-residue chain is Rab effector Noc2 (315 aa).

One can recognise a RabBD domain in the interval 41–158; it reads QRRKQHLSPA…KRSGAWFYKG (118 aa). The segment at 89–146 adopts an FYVE-type zinc-finger fold; sequence GNGLSQCLLCGEVLGFLGSSSVFCKDCRKKVCTKCGIEASPGQKRPLWLCKICSEQRE. Residues cysteine 95, cysteine 98, cysteine 112, cysteine 115, cysteine 120, cysteine 123, cysteine 138, and cysteine 141 each contribute to the Zn(2+) site. The disordered stretch occupies residues 170 to 315; the sequence is GRADDPHFRP…APAGPSSCLG (146 aa). Composition is skewed to basic and acidic residues over residues 184–193 and 221–240; these read PAEREPRSSE and LEDRLPSTGVRDRKGDKPWK. The span at 262–275 shows a compositional bias: polar residues; the sequence is GCQSSLASGETGTG. Residues 298–315 show a composition bias toward low complexity; that stretch reads GRAPAADAAPAGPSSCLG.

Recruited to dense-core vesicles through specific interaction with RAB27A in endocrine cells. Interacts with RAB3A, RAB3B, RAB3C and RAB3D. Interacts with ZYX. In terms of tissue distribution, moderate to high levels of expression in thyroid, ovary, stomach, heart, pancreas, skeletal muscle, kidney and liver. Also detected in epithelial cells.

Its subcellular location is the cytoplasm. It is found in the cytoplasmic vesicle. The protein localises to the secretory vesicle membrane. Rab GTPase effector involved in the late steps of regulated exocytosis, both in endocrine and exocrine cells. Acts as a potential RAB3B effector protein in epithelial cells. This Homo sapiens (Human) protein is Rab effector Noc2 (RPH3AL).